The primary structure comprises 197 residues: Pyridoxal 5'-phosphate synthase subunit PdxT (197 aa).

53 to 55 contributes to the L-glutamine binding site; the sequence is GES. Residue C85 is the Nucleophile of the active site. L-glutamine-binding positions include R114 and 142–143; that span reads IR. Active-site charge relay system residues include H179 and E181.

It belongs to the glutaminase PdxT/SNO family. As to quaternary structure, in the presence of PdxS, forms a dodecamer of heterodimers. Only shows activity in the heterodimer.

It carries out the reaction aldehydo-D-ribose 5-phosphate + D-glyceraldehyde 3-phosphate + L-glutamine = pyridoxal 5'-phosphate + L-glutamate + phosphate + 3 H2O + H(+). It catalyses the reaction L-glutamine + H2O = L-glutamate + NH4(+). Its pathway is cofactor biosynthesis; pyridoxal 5'-phosphate biosynthesis. Functionally, catalyzes the hydrolysis of glutamine to glutamate and ammonia as part of the biosynthesis of pyridoxal 5'-phosphate. The resulting ammonia molecule is channeled to the active site of PdxS. The protein is Pyridoxal 5'-phosphate synthase subunit PdxT of Pyrococcus furiosus (strain ATCC 43587 / DSM 3638 / JCM 8422 / Vc1).